Here is a 660-residue protein sequence, read N- to C-terminus: Threonine--tRNA ligase (660 aa).

The TGS domain occupies 1 to 64 (MSHSVSLTFP…TEGRIEIVTR (64 aa)). The segment at 245–547 (DHRRLGREMD…LLENFAGHMP (303 aa)) is catalytic. C341, H392, and H524 together coordinate Zn(2+).

It belongs to the class-II aminoacyl-tRNA synthetase family. As to quaternary structure, homodimer. The cofactor is Zn(2+).

The protein resides in the cytoplasm. It carries out the reaction tRNA(Thr) + L-threonine + ATP = L-threonyl-tRNA(Thr) + AMP + diphosphate + H(+). Its function is as follows. Catalyzes the attachment of threonine to tRNA(Thr) in a two-step reaction: L-threonine is first activated by ATP to form Thr-AMP and then transferred to the acceptor end of tRNA(Thr). Also edits incorrectly charged L-seryl-tRNA(Thr). This is Threonine--tRNA ligase from Sinorhizobium medicae (strain WSM419) (Ensifer medicae).